The following is a 569-amino-acid chain: Pyruvate decarboxylase (569 aa).

Pyruvate is bound by residues Asp-38 and His-124. Residues Thr-398 and 421 to 423 contribute to the thiamine diphosphate site; that span reads GSI. Position 451 (Asp-451) interacts with Mg(2+). Thiamine diphosphate contacts are provided by residues 452 to 453 and 478 to 483; these read GS and NEGYTI. Positions 478 and 480 each coordinate Mg(2+). Residue Glu-484 participates in pyruvate binding.

It belongs to the TPP enzyme family. As to quaternary structure, homotetramer. Mg(2+) serves as cofactor. Thiamine diphosphate is required as a cofactor.

The catalysed reaction is a 2-oxocarboxylate + H(+) = an aldehyde + CO2. It catalyses the reaction pyruvate + H(+) = acetaldehyde + CO2. This chain is Pyruvate decarboxylase (pdcA), found in Aspergillus fumigatus (strain ATCC MYA-4609 / CBS 101355 / FGSC A1100 / Af293) (Neosartorya fumigata).